A 295-amino-acid polypeptide reads, in one-letter code: Bifunctional protein FolD (295 aa).

Residues 175–177 (GVS) and Ile-243 each bind NADP(+).

It belongs to the tetrahydrofolate dehydrogenase/cyclohydrolase family. In terms of assembly, homodimer.

The catalysed reaction is (6R)-5,10-methylene-5,6,7,8-tetrahydrofolate + NADP(+) = (6R)-5,10-methenyltetrahydrofolate + NADPH. It carries out the reaction (6R)-5,10-methenyltetrahydrofolate + H2O = (6R)-10-formyltetrahydrofolate + H(+). It functions in the pathway one-carbon metabolism; tetrahydrofolate interconversion. Its function is as follows. Catalyzes the oxidation of 5,10-methylenetetrahydrofolate to 5,10-methenyltetrahydrofolate and then the hydrolysis of 5,10-methenyltetrahydrofolate to 10-formyltetrahydrofolate. The chain is Bifunctional protein FolD from Xylella fastidiosa (strain 9a5c).